The chain runs to 617 residues: Protein kinase STUNTED (617 aa).

The interval 162-187 is disordered; sequence SSELSEGFSDKDLAKTTGQEKRKISG. Basic and acidic residues predominate over residues 169–184; the sequence is FSDKDLAKTTGQEKRK. The Protein kinase domain occupies 277-555; it reads FSLENLIGKG…RGEDDVSKWV (279 aa). ATP is bound by residues 283–291 and Lys305; that span reads IGKGGCNEV. A Phosphotyrosine modification is found at Tyr350. The active-site Proton acceptor is Asp399. A Phosphoserine modification is found at Ser403. Thr439 bears the Phosphothreonine mark. Tyr447 carries the phosphotyrosine modification. Positions 590 to 617 are disordered; the sequence is DSVSNSSLERSNNSLFSSSSSSSQELQS. Residues 591–617 are compositionally biased toward low complexity; the sequence is SVSNSSLERSNNSLFSSSSSSSQELQS.

It belongs to the protein kinase superfamily. Ser/Thr protein kinase family. Expressed ubiquitously, mostly in roots, to a lower extent in leaves, floral buds and stems, and, at low levels, in flowers and siliques.

Its subcellular location is the cytoplasm. In terms of biological role, promotes cell proliferation in the gibberellic acid (GA) signaling pathway, acting downstream of RGA, and possibly through a negative regulation of two cyclin-dependent kinase inhibitors SIM and SMR1. The polypeptide is Protein kinase STUNTED (Arabidopsis thaliana (Mouse-ear cress)).